Reading from the N-terminus, the 143-residue chain is Antiholin-like protein LrgA (143 aa).

4 helical membrane passes run 6–26, 30–50, 61–81, and 97–117; these read VYSF…SNII, LPIP…LLCL, LGTA…ISVI, and VIVV…QFIL.

It belongs to the CidA/LrgA family. LrgA subfamily.

It localises to the cell membrane. Functionally, inhibits the expression or activity of extracellular murein hydrolases by interacting, possibly with LrgB, with the holin-like protein CidA. The LrgAB and CidA proteins may affect the proton motive force of the membrane. May be involved in programmed cell death (PCD), possibly triggering PCD in response to antibiotics and environmental stresses. In Bacillus anthracis (strain A0248), this protein is Antiholin-like protein LrgA.